We begin with the raw amino-acid sequence, 508 residues long: Kinesin light chain (508 aa).

Positions 34 to 129 (IAEVQKDNEK…KKHLEFMASV (96 aa)) form a coiled coil. The segment at 156–175 (DEENEDRHNMSPTPPSQFAN) is disordered. Phosphothreonine is present on Thr168. TPR repeat units follow at residues 186–219 (LRTL…LERT), 228–261 (ATML…RGKT), 270–303 (AATL…REKV), 312–345 (AKQL…YESK), 354–387 (AKTK…AHER), and 437–470 (TTTL…KKEA). Position 477 is a phosphothreonine (Thr477). 2 positions are modified to phosphoserine: Ser480 and Ser485. The disordered stretch occupies residues 484–508 (TSNEKRRSKAIKEDLDFSEEKNAKP). Over residues 493-508 (AIKEDLDFSEEKNAKP) the composition is skewed to basic and acidic residues.

Belongs to the kinesin light chain family. Oligomeric complex composed of two heavy chains and two light chains. As to expression, ubiquitous.

It is found in the cytoplasm. Its subcellular location is the cytoskeleton. Its function is as follows. Kinesin is a microtubule-associated force-producing protein that may play a role in organelle transport. The light chain may function in coupling of cargo to the heavy chain or in the modulation of its ATPase activity. In Drosophila melanogaster (Fruit fly), this protein is Kinesin light chain (Klc).